Reading from the N-terminus, the 295-residue chain is Small ribosomal subunit protein uS2 (295 aa).

This sequence belongs to the universal ribosomal protein uS2 family.

The sequence is that of Small ribosomal subunit protein uS2 from Rickettsia canadensis (strain McKiel).